The chain runs to 242 residues: N-alpha-acetyltransferase 60 (242 aa).

Residues 1 to 192 lie on the Cytoplasmic side of the membrane; the sequence is MTEVVPSSAL…GGHPPWTILD (192 aa). Residues 13-182 enclose the N-acetyltransferase domain; the sequence is VSLRLLCHDD…DGFTYVLYIN (170 aa). Tyr-38 lines the substrate pocket. Lys-79 bears the N6-acetyllysine; by autocatalysis mark. Tyr-97 is a catalytic residue. Substrate is bound at residue Leu-99. 101 to 103 provides a ligand contact to acetyl-CoA; the sequence is LGV. Lys-105, Lys-109, and Lys-121 each carry N6-acetyllysine; by autocatalysis. Position 109–114 (109–114) interacts with acetyl-CoA; sequence KHGIGS. His-138 is an active-site residue. Residues Asn-143 and 150 to 153 each bind acetyl-CoA; that span reads YENR. A required for homodimerization region spans residues 162–173; that stretch reads PYYYSIRGVLKD. Tyr-165 contributes to the substrate binding site. The helical intramembrane region spans 193-236; that stretch reads YIQHLGSALANLSPCSIPHRIYRQAHSLLCSFLPWSSISSKGGI. Topologically, residues 237–242 are cytoplasmic; sequence EYSRTM.

Belongs to the acetyltransferase family. NAA60 subfamily. In terms of assembly, monomer and homodimer; monomer in presence of substrate and homodimer in its absence. Acetylated: autoacetylation is required for optimal acetyltransferase activity.

The protein resides in the golgi apparatus membrane. It carries out the reaction N-terminal L-methionyl-[transmembrane protein] + acetyl-CoA = N-terminal N(alpha)-acetyl-L-methionyl-[transmembrane protein] + CoA + H(+). The enzyme catalyses L-lysyl-[protein] + acetyl-CoA = N(6)-acetyl-L-lysyl-[protein] + CoA + H(+). Its function is as follows. N-alpha-acetyltransferase that specifically mediates the acetylation of N-terminal residues of the transmembrane proteins, with a strong preference for N-termini facing the cytosol. Displays N-terminal acetyltransferase activity towards a range of N-terminal sequences including those starting with Met-Lys, Met-Val, Met-Ala and Met-Met. Required for normal chromosomal segregation during anaphase. May also show histone acetyltransferase activity; such results are however unclear in vivo and would require additional experimental evidences. This is N-alpha-acetyltransferase 60 (Naa60) from Rattus norvegicus (Rat).